A 421-amino-acid polypeptide reads, in one-letter code: Alpha-1-antiproteinase 2 (421 aa).

Positions 1–24 (MPSSVPWCLLLLAGLCCLVPSSLA) are cleaved as a signal peptide. Residues N73, N110, and N274 are each glycosylated (N-linked (GlcNAc...) asparagine). An RCL region spans residues 376-395 (GTTMWEIMPISLPPDLKFNR).

This sequence belongs to the serpin family. In terms of processing, N-glycosylated with carbohydrates having biantennary side chains. Plasma.

Its subcellular location is the secreted. In terms of biological role, inhibitor of serine proteases. In Equus caballus (Horse), this protein is Alpha-1-antiproteinase 2.